We begin with the raw amino-acid sequence, 335 residues long: Succinylglutamate desuccinylase (335 aa).

Residues His59, Glu62, and His151 each coordinate Zn(2+). Residue Glu215 is part of the active site.

This sequence belongs to the AspA/AstE family. Succinylglutamate desuccinylase subfamily. The cofactor is Zn(2+).

The catalysed reaction is N-succinyl-L-glutamate + H2O = L-glutamate + succinate. Its pathway is amino-acid degradation; L-arginine degradation via AST pathway; L-glutamate and succinate from L-arginine: step 5/5. Transforms N(2)-succinylglutamate into succinate and glutamate. The chain is Succinylglutamate desuccinylase from Pseudomonas putida (strain ATCC 47054 / DSM 6125 / CFBP 8728 / NCIMB 11950 / KT2440).